The following is a 142-amino-acid chain: Hemoglobin subunit zeta (142 aa).

The residue at position 2 (serine 2) is an N-acetylserine. One can recognise a Globin domain in the interval 2–142 (SLTKTEGTII…VSSVLTEKYR (141 aa)). Threonine 29 carries the post-translational modification Phosphothreonine. Serine 53 carries the post-translational modification Phosphoserine. Histidine 59 lines the heme b pocket. Residues serine 73 and serine 82 each carry the phosphoserine modification. Residue histidine 88 coordinates heme b.

Belongs to the globin family. In terms of assembly, heterotetramer of two zeta chains and beta-type chains.

Functionally, the zeta chain is an alpha-type chain of mammalian embryonic hemoglobin. The sequence is that of Hemoglobin subunit zeta (HBZ1) from Pan troglodytes (Chimpanzee).